The following is a 652-amino-acid chain: Probable protein phosphatase 2C 19 (652 aa).

The 253-residue stretch at 265-517 (KYVVSSMQGW…DNTTVILVLF (253 aa)) folds into the PPM-type phosphatase domain. Residues aspartate 300, glycine 301, glutamate 467, and aspartate 508 each contribute to the Mn(2+) site. The segment at 524 to 567 (AVPPVDTDTDTDSHTGDDVDNNDPANEVDPTANAGSDDSNTSDE) is disordered.

Belongs to the PP2C family. Mg(2+) is required as a cofactor. Requires Mn(2+) as cofactor.

The enzyme catalyses O-phospho-L-seryl-[protein] + H2O = L-seryl-[protein] + phosphate. It carries out the reaction O-phospho-L-threonyl-[protein] + H2O = L-threonyl-[protein] + phosphate. The chain is Probable protein phosphatase 2C 19 from Oryza sativa subsp. japonica (Rice).